A 691-amino-acid chain; its full sequence is DNA-directed RNA polymerase subunit beta' (691 aa).

Residues cysteine 76, cysteine 78, cysteine 94, and cysteine 97 each coordinate Zn(2+). 3 residues coordinate Mg(2+): aspartate 496, aspartate 498, and aspartate 500.

The protein belongs to the RNA polymerase beta' chain family. RpoC1 subfamily. Mg(2+) serves as cofactor. Requires Zn(2+) as cofactor.

It localises to the plastid. The catalysed reaction is RNA(n) + a ribonucleoside 5'-triphosphate = RNA(n+1) + diphosphate. Its function is as follows. DNA-dependent RNA polymerase catalyzes the transcription of DNA into RNA using the four ribonucleoside triphosphates as substrates. The polypeptide is DNA-directed RNA polymerase subunit beta' (Cuscuta exaltata (Tall dodder)).